Reading from the N-terminus, the 625-residue chain is 1-deoxy-D-xylulose-5-phosphate synthase (625 aa).

Thiamine diphosphate contacts are provided by residues His80 and 121-123 (GHS). Residue Asp152 coordinates Mg(2+). Thiamine diphosphate contacts are provided by residues 153–154 (GA), Asn181, Tyr288, and Glu370. Position 181 (Asn181) interacts with Mg(2+).

It belongs to the transketolase family. DXPS subfamily. In terms of assembly, homodimer. Mg(2+) is required as a cofactor. Thiamine diphosphate serves as cofactor.

The enzyme catalyses D-glyceraldehyde 3-phosphate + pyruvate + H(+) = 1-deoxy-D-xylulose 5-phosphate + CO2. Its pathway is metabolic intermediate biosynthesis; 1-deoxy-D-xylulose 5-phosphate biosynthesis; 1-deoxy-D-xylulose 5-phosphate from D-glyceraldehyde 3-phosphate and pyruvate: step 1/1. In terms of biological role, catalyzes the acyloin condensation reaction between C atoms 2 and 3 of pyruvate and glyceraldehyde 3-phosphate to yield 1-deoxy-D-xylulose-5-phosphate (DXP). The protein is 1-deoxy-D-xylulose-5-phosphate synthase of Alteromonas mediterranea (strain DSM 17117 / CIP 110805 / LMG 28347 / Deep ecotype).